A 30-amino-acid polypeptide reads, in one-letter code: Cycloviolacin-H3 (30 aa).

The cyclopeptide (Gly-Asn) cross-link spans 1 to 30 (GLPVCGETCFGGTCNTPGCICDPWPVCTRN). Intrachain disulfides connect Cys-5–Cys-19, Cys-9–Cys-21, and Cys-14–Cys-27.

Post-translationally, this is a cyclic peptide.

Functionally, probably participates in a plant defense mechanism. The protein is Cycloviolacin-H3 of Viola hederacea (Australian violet).